A 54-amino-acid chain; its full sequence is Ovomucoid (54 aa).

Residues 4–54 (VDCSGYPTHACTLELKPLCGSDNQTYSNKCGFCNAVAQSNGTLTLSHFGKC) form the Kazal-like domain. 3 cysteine pairs are disulfide-bonded: Cys6/Cys36, Cys14/Cys33, and Cys22/Cys54. Residue Asn43 is glycosylated (N-linked (GlcNAc...) asparagine).

It localises to the secreted. In Leipoa ocellata (Malleefowl), this protein is Ovomucoid.